The primary structure comprises 293 residues: Homeobox protein ceh-24 (293 aa).

Basic and acidic residues-rich tracts occupy residues 1–15 (MSEKESPSPQHKKDE) and 22–38 (QETKDSEDDATKKMKIK). Disordered regions lie at residues 1–38 (MSEKESPSPQHKKDEVVDDTEQETKDSEDDATKKMKIK) and 203–256 (EKEK…SNGV). The segment at residues 144-203 (RRKRRVLFSQAQVYELERRFKQAKYLTAPEREQLANSIRLTPTQVKIWFQNHRYKCKRQE) is a DNA-binding region (homeobox).

It belongs to the NK-2 homeobox family. As to expression, expressed in the 8 vulval muscles, 8-10 ventral neurons in the head and in the most posterior pharyngeal muscle cell, m8.

Its subcellular location is the nucleus. Functionally, probable transcriptional regulator that is required in neural development for the normal formation of sublateral cholinergic motor neuron processes. Plays a role in regulating the expression of acetylcholine transporter protein unc-17 in the sublateral processes. In particular, it is required in sublateral motor neurons for a left-right turning behavior that occurs during the lethargus phase of the normal sleep process called 'flipping'. During 'flipping' animals rotate 180 degrees about their longitudinal axis. The chain is Homeobox protein ceh-24 from Caenorhabditis briggsae.